The sequence spans 629 residues: tRNA uridine 5-carboxymethylaminomethyl modification enzyme MnmG (629 aa).

FAD contacts are provided by residues 15-20 (GAGHAG), Val127, and Ser182. Residues 203-226 (TPPRVKSSTIDYSKTEEQPGDDHP) form a disordered region. Positions 215 to 226 (SKTEEQPGDDHP) are enriched in basic and acidic residues. 274 to 288 (GARYCPSIEDKIVRF) is a binding site for NAD(+). Gln371 lines the FAD pocket.

Belongs to the MnmG family. In terms of assembly, homodimer. Heterotetramer of two MnmE and two MnmG subunits. FAD is required as a cofactor.

It is found in the cytoplasm. Its function is as follows. NAD-binding protein involved in the addition of a carboxymethylaminomethyl (cmnm) group at the wobble position (U34) of certain tRNAs, forming tRNA-cmnm(5)s(2)U34. The protein is tRNA uridine 5-carboxymethylaminomethyl modification enzyme MnmG of Listeria monocytogenes serovar 1/2a (strain ATCC BAA-679 / EGD-e).